A 559-amino-acid polypeptide reads, in one-letter code: 3-aminoavenalumate diazotase (559 aa).

Ser-181 contacts Mg(2+). 3 residues coordinate ATP: Ala-227, Gly-332, and Ser-336. Glu-337 serves as a coordination point for Mg(2+). Residues Asp-416 and Arg-437 each coordinate ATP.

Belongs to the ATP-dependent AMP-binding enzyme family. Mg(2+) is required as a cofactor.

The enzyme catalyses 3-aminoavenalumate + nitrite + ATP = 3-diazoavenalumate + AMP + diphosphate + H2O. It catalyses the reaction (E)-3-aminocoumarate + nitrite + ATP + H(+) = (E)-3-diazocoumarate + AMP + diphosphate + H2O. The catalysed reaction is 3-amino-4-hydroxybenzoate + nitrite + ATP + H(+) = 3-diazo-4-hydroxybenzoate + AMP + diphosphate + H2O. Functionally, ligase involved in the biosynthesis of avenalumic acid (AVA). Catalyzes the diazotization of 3-aminoavenalumic acid (3-AAA) to 3-diazoavenalumic acid (3-DAA). It can also act on 3-aminocoumaric acid (3-ACA) and 3-amino-4-hydroxybenzoic acid (3,4-AHBA) with lower activity. The polypeptide is 3-aminoavenalumate diazotase (Streptomyces sp).